The following is a 160-amino-acid chain: Eosinophil cationic protein (160 aa).

Residues 1 to 27 (MVPKLFTSQICLLLLLGLSGVGGSLHA) form the signal peptide. Residues 28–72 (KPRQFTRAQWFAIQHVSLNPPQCTTAMRVINNYQRRCKDQNTFLR) are required for nearly all of the bactericidal activities; partially involved in LPS-binding. Catalysis depends on His-42, which acts as the Proton acceptor. 4 cysteine pairs are disulfide-bonded: Cys-50/Cys-110, Cys-64/Cys-123, Cys-82/Cys-138, and Cys-89/Cys-98. Position 60 is a 3'-nitrotyrosine (Tyr-60). 65-69 (KDQNT) contacts substrate. N-linked (GlcNAc...) asparagine glycosylation is found at Asn-86, Asn-92, Asn-111, and Asn-119. The Proton donor role is filled by His-155.

Belongs to the pancreatic ribonuclease family. As to quaternary structure, interacts with bacterial lipopolysaccharide (LPS) and lipoteichoic acid (LTA). In vitro interacts with phospholipid bilayers.

It localises to the secreted. Its function is as follows. Cytotoxin and helminthotoxin with low-efficiency ribonuclease activity. Possesses a wide variety of biological activities. Exhibits antibacterial activity. The protein is Eosinophil cationic protein (RNASE3) of Pongo pygmaeus (Bornean orangutan).